The sequence spans 136 residues: MLSPKRTRFRKQHRGRMKGKSYRGNCICFGRYALQALEPTWITARQIEAGRRAMTRYARRGGKIWVRIFPDKPVTIRPTETRMGSGKGSPEYWVAVVKPGRILYEMGGVSETVARVAISIAASKMPIRSQFLRLEI.

This sequence belongs to the universal ribosomal protein uL16 family. Part of the 50S ribosomal subunit.

The protein localises to the plastid. Its subcellular location is the chloroplast. The polypeptide is Large ribosomal subunit protein uL16c (Oryza nivara (Indian wild rice)).